A 362-amino-acid chain; its full sequence is Ribosomal RNA large subunit methyltransferase M (362 aa).

Residues S187, C220–G223, D239, D259, and D276 contribute to the S-adenosyl-L-methionine site. Catalysis depends on K305, which acts as the Proton acceptor.

It belongs to the class I-like SAM-binding methyltransferase superfamily. RNA methyltransferase RlmE family. RlmM subfamily. As to quaternary structure, monomer.

It is found in the cytoplasm. The catalysed reaction is cytidine(2498) in 23S rRNA + S-adenosyl-L-methionine = 2'-O-methylcytidine(2498) in 23S rRNA + S-adenosyl-L-homocysteine + H(+). Catalyzes the 2'-O-methylation at nucleotide C2498 in 23S rRNA. The protein is Ribosomal RNA large subunit methyltransferase M of Shewanella frigidimarina (strain NCIMB 400).